The sequence spans 163 residues: UPF0478 protein SERP1299 (163 aa).

Residues 7–27 traverse the membrane as a helical segment; sequence IAGIIAAIAFLILCIGIVVVL.

This sequence belongs to the UPF0478 family.

It localises to the cell membrane. The protein is UPF0478 protein SERP1299 of Staphylococcus epidermidis (strain ATCC 35984 / DSM 28319 / BCRC 17069 / CCUG 31568 / BM 3577 / RP62A).